The chain runs to 492 residues: Protein nucleotidyltransferase YdiU (492 aa).

Gly91, Gly93, Arg94, Lys114, Asp126, Gly127, Arg180, and Arg187 together coordinate ATP. The Proton acceptor role is filled by Asp256. 2 residues coordinate Mg(2+): Asn257 and Asp266. Asp266 provides a ligand contact to ATP.

It belongs to the SELO family. It depends on Mg(2+) as a cofactor. Mn(2+) serves as cofactor.

It catalyses the reaction L-seryl-[protein] + ATP = 3-O-(5'-adenylyl)-L-seryl-[protein] + diphosphate. The enzyme catalyses L-threonyl-[protein] + ATP = 3-O-(5'-adenylyl)-L-threonyl-[protein] + diphosphate. The catalysed reaction is L-tyrosyl-[protein] + ATP = O-(5'-adenylyl)-L-tyrosyl-[protein] + diphosphate. It carries out the reaction L-histidyl-[protein] + UTP = N(tele)-(5'-uridylyl)-L-histidyl-[protein] + diphosphate. It catalyses the reaction L-seryl-[protein] + UTP = O-(5'-uridylyl)-L-seryl-[protein] + diphosphate. The enzyme catalyses L-tyrosyl-[protein] + UTP = O-(5'-uridylyl)-L-tyrosyl-[protein] + diphosphate. In terms of biological role, nucleotidyltransferase involved in the post-translational modification of proteins. It can catalyze the addition of adenosine monophosphate (AMP) or uridine monophosphate (UMP) to a protein, resulting in modifications known as AMPylation and UMPylation. The chain is Protein nucleotidyltransferase YdiU from Synechococcus sp. (strain ATCC 27144 / PCC 6301 / SAUG 1402/1) (Anacystis nidulans).